The chain runs to 387 residues: Flap endonuclease 1 (387 aa).

The N-domain stretch occupies residues 1–104 (MGIKGLSQLI…GELEKRKERQ (104 aa)). A Mg(2+)-binding site is contributed by D34. Residue R70 participates in DNA binding. 5 residues coordinate Mg(2+): D86, E158, E160, D179, and D181. The I-domain stretch occupies residues 122 to 253 (KMVMWNKRTT…KKALAMIKKY (132 aa)). DNA is bound at residue E158. The DNA site is built by G231 and D233. D233 is a binding site for Mg(2+). A disordered region spans residues 332–387 (SSRGKPTQTRLDGFFTPVASSSTTKKKAPAKKDDKKSATDKKRKAADASTSSKKKK). An interaction with PCNA region spans residues 338–346 (TQTRLDGFF). Positions 361-371 (AKKDDKKSATD) are enriched in basic and acidic residues. A compositionally biased stretch (low complexity) spans 378-387 (DASTSSKKKK).

It belongs to the XPG/RAD2 endonuclease family. FEN1 subfamily. In terms of assembly, interacts with PCNA. Three molecules of FEN1 bind to one PCNA trimer with each molecule binding to one PCNA monomer. PCNA stimulates the nuclease activity without altering cleavage specificity. Mg(2+) is required as a cofactor. In terms of processing, phosphorylated. Phosphorylation upon DNA damage induces relocalization to the nuclear plasma.

Its subcellular location is the nucleus. The protein resides in the nucleolus. The protein localises to the nucleoplasm. It localises to the mitochondrion. Structure-specific nuclease with 5'-flap endonuclease and 5'-3' exonuclease activities involved in DNA replication and repair. During DNA replication, cleaves the 5'-overhanging flap structure that is generated by displacement synthesis when DNA polymerase encounters the 5'-end of a downstream Okazaki fragment. It enters the flap from the 5'-end and then tracks to cleave the flap base, leaving a nick for ligation. Also involved in the long patch base excision repair (LP-BER) pathway, by cleaving within the apurinic/apyrimidinic (AP) site-terminated flap. Acts as a genome stabilization factor that prevents flaps from equilibrating into structures that lead to duplications and deletions. Also possesses 5'-3' exonuclease activity on nicked or gapped double-stranded DNA, and exhibits RNase H activity. Also involved in replication and repair of rDNA and in repairing mitochondrial DNA. This Naegleria gruberi (Amoeba) protein is Flap endonuclease 1.